The chain runs to 161 residues: Transcription elongation factor GreA (161 aa).

A coiled-coil region spans residues 45-72 (NAEYHSAKEKLKLIDIQIAELNAVISKA).

It belongs to the GreA/GreB family.

In terms of biological role, necessary for efficient RNA polymerase transcription elongation past template-encoded arresting sites. The arresting sites in DNA have the property of trapping a certain fraction of elongating RNA polymerases that pass through, resulting in locked ternary complexes. Cleavage of the nascent transcript by cleavage factors such as GreA or GreB allows the resumption of elongation from the new 3'terminus. GreA releases sequences of 2 to 3 nucleotides. The chain is Transcription elongation factor GreA from Aliarcobacter butzleri (strain RM4018) (Arcobacter butzleri).